A 102-amino-acid chain; its full sequence is Large ribosomal subunit protein uL24 (102 aa).

Belongs to the universal ribosomal protein uL24 family. Part of the 50S ribosomal subunit.

Functionally, one of two assembly initiator proteins, it binds directly to the 5'-end of the 23S rRNA, where it nucleates assembly of the 50S subunit. In terms of biological role, one of the proteins that surrounds the polypeptide exit tunnel on the outside of the subunit. This Alcanivorax borkumensis (strain ATCC 700651 / DSM 11573 / NCIMB 13689 / SK2) protein is Large ribosomal subunit protein uL24.